Here is a 677-residue protein sequence, read N- to C-terminus: Transmembrane and coiled-coil domain-containing protein 3 (677 aa).

An N-terminal signal peptide occupies residues 1 to 22; it reads MKVLGRSFFWVLFPVLPWAVQA. Residues 124 to 204 are a coiled coil; sequence DYKDVVNMKE…EEEIEEHAFD (81 aa). Residues Asn206 and Asn230 are each glycosylated (N-linked (GlcNAc...) asparagine). A run of 10 helical transmembrane segments spans residues 286 to 306, 317 to 337, 350 to 370, 416 to 436, 456 to 476, 498 to 518, 554 to 574, 578 to 598, 608 to 628, and 640 to 660; these read WLCT…GVLL, IVQV…LVGL, ISLQ…LLWG, VLLG…AVMP, ILVL…LCLV, EILI…TELL, FLAI…FVAY, VLVF…ALVL, YIKW…FVLG, and EVYL…PVLW.

It belongs to the monovalent cation:proton antiporter 2 (CPA2) transporter (TC 2.A.37) family. Expressed in the cornea, lens capsule and choroid-retinal pigment epithelium (at protein level).

Its subcellular location is the membrane. Functionally, probable Na(+)/H(+) antiporter. The protein is Transmembrane and coiled-coil domain-containing protein 3 (TMCO3) of Homo sapiens (Human).